A 103-amino-acid polypeptide reads, in one-letter code: Urease subunit beta (103 aa).

The protein belongs to the urease beta subunit family. Heterotrimer of UreA (gamma), UreB (beta) and UreC (alpha) subunits. Three heterotrimers associate to form the active enzyme.

Its subcellular location is the cytoplasm. The catalysed reaction is urea + 2 H2O + H(+) = hydrogencarbonate + 2 NH4(+). The protein operates within nitrogen metabolism; urea degradation; CO(2) and NH(3) from urea (urease route): step 1/1. The chain is Urease subunit beta from Streptomyces coelicolor (strain ATCC BAA-471 / A3(2) / M145).